A 447-amino-acid chain; its full sequence is Peptide-N(4)-(N-acetyl-beta-glucosaminyl)asparagine amidase (447 aa).

The Zn(2+) site is built by Cys-209, Cys-212, Cys-241, and Cys-244. Cys-267 functions as the Nucleophile in the catalytic mechanism. Residues His-294 and Asp-311 contribute to the active site.

The protein belongs to the transglutaminase-like superfamily. PNGase family. It depends on Zn(2+) as a cofactor.

It is found in the cytoplasm. The enzyme catalyses Hydrolysis of an N(4)-(acetyl-beta-D-glucosaminyl)asparagine residue in which the glucosamine residue may be further glycosylated, to yield a (substituted) N-acetyl-beta-D-glucosaminylamine and a peptide containing an aspartate residue.. Functionally, specifically deglycosylates the denatured form of N-linked glycoproteins in the cytoplasm and assists their proteasome-mediated degradation. Cleaves the beta-aspartyl-glucosamine (GlcNAc) of the glycan and the amide side chain of Asn, converting Asn to Asp. Prefers proteins containing high-mannose over those bearing complex type oligosaccharides. Can recognize misfolded proteins in the endoplasmic reticulum that are exported to the cytosol to be destroyed and deglycosylate them, while it has no activity toward native proteins. Deglycosylation is a prerequisite for subsequent proteasome-mediated degradation of some, but not all, misfolded glycoproteins. The polypeptide is Peptide-N(4)-(N-acetyl-beta-glucosaminyl)asparagine amidase (PNG1) (Oryza sativa subsp. japonica (Rice)).